The primary structure comprises 429 residues: Saccharopine dehydrogenase-like oxidoreductase (429 aa).

Ala2 is modified (N-acetylalanine). A Phosphoserine modification is found at Ser217.

The protein belongs to the saccharopine dehydrogenase family.

The sequence is that of Saccharopine dehydrogenase-like oxidoreductase (SCCPDH) from Homo sapiens (Human).